Here is a 458-residue protein sequence, read N- to C-terminus: Chromosomal replication initiator protein DnaA (458 aa).

The domain I, interacts with DnaA modulators stretch occupies residues 1–93 (MKTELSEVWQ…NVIEDPAAEP (93 aa)). The tract at residues 94 to 119 (VDAPNVADLPAGTSAPAAEQNARLLG) is domain II. The tract at residues 120–336 (YINPKYTFET…GALTRVVAYA (217 aa)) is domain III, AAA+ region. ATP is bound by residues Gly164, Gly166, Lys167, and Thr168. The tract at residues 337-458 (NMLKCPLTYD…EQLIARIRAE (122 aa)) is domain IV, binds dsDNA.

Belongs to the DnaA family. Oligomerizes as a right-handed, spiral filament on DNA at oriC.

Its subcellular location is the cytoplasm. Its function is as follows. Plays an essential role in the initiation and regulation of chromosomal replication. ATP-DnaA binds to the origin of replication (oriC) to initiate formation of the DNA replication initiation complex once per cell cycle. Binds the DnaA box (a 9 base pair repeat at the origin) and separates the double-stranded (ds)DNA. Forms a right-handed helical filament on oriC DNA; dsDNA binds to the exterior of the filament while single-stranded (ss)DNA is stabiized in the filament's interior. The ATP-DnaA-oriC complex binds and stabilizes one strand of the AT-rich DNA unwinding element (DUE), permitting loading of DNA polymerase. After initiation quickly degrades to an ADP-DnaA complex that is not apt for DNA replication. Binds acidic phospholipids. The protein is Chromosomal replication initiator protein DnaA of Symbiobacterium thermophilum (strain DSM 24528 / JCM 14929 / IAM 14863 / T).